A 570-amino-acid polypeptide reads, in one-letter code: Protein misato homolog 1 (570 aa).

The residue at position 495 (Ser495) is a Phosphoserine.

It belongs to the misato family.

Its subcellular location is the mitochondrion outer membrane. It localises to the cytoplasm. Its function is as follows. Involved in the regulation of mitochondrial distribution and morphology. Required for mitochondrial fusion and mitochondrial network formation. In Pongo pygmaeus (Bornean orangutan), this protein is Protein misato homolog 1 (MSTO1).